The following is a 736-amino-acid chain: Gephyrin (736 aa).

An MPT Mo-transferase region spans residues 14–166 (QIRVGVLTVS…FILPALPHAI (153 aa)). Residues 140–316 (LIINLPGSKK…VDITKVARRH (177 aa)) form an interaction with GABARAP region. Disordered regions lie at residues 181-232 (DELE…DSSS) and 260-290 (TASLSTTPSESPRAQATSRLSTASCPTPKVQ). The segment covering 187–199 (PSPPPPLSPPPTT) has biased composition (pro residues). Ser188 and Ser194 each carry phosphoserine. Thr198 is modified (phosphothreonine). Phosphoserine is present on Ser200. Cys212 is lipidated: S-palmitoyl cysteine. Polar residues predominate over residues 261 to 290 (ASLSTTPSESPRAQATSRLSTASCPTPKVQ). Ser262 is modified (phosphoserine). Thr265 and Thr266 each carry phosphothreonine. Ser268 and Ser270 each carry phosphoserine. The S-palmitoyl cysteine moiety is linked to residue Cys284. Residue Ser305 is modified to Phosphoserine. An MPT adenylyltransferase region spans residues 326-736 (MDKAFITVLE…VVDVMVIGRL (411 aa)).

This sequence in the N-terminal section; belongs to the MoaB/Mog family. The protein in the C-terminal section; belongs to the MoeA family. In terms of assembly, homotrimer, homodimer and homooligomer. Interacts with GABARAP. Interacts with SRGAP2 (via SH3 domain). Interacts with GABRA3. Interacts with GLRB. GABRA3 and GLRB occupy overlapping binding sites. Interacts with ARHGAP32; IQSEC3, INSYN1 and INSYN2A. Mg(2+) is required as a cofactor. Palmitoylated. Palmitoylation is stimulated by GABA type A receptors activity. Palmitoylation by ZDHHC12 regulates clustering at synapses.

Its subcellular location is the postsynaptic cell membrane. The protein resides in the cell membrane. It localises to the cytoplasm. It is found in the cytosol. The protein localises to the cytoskeleton. Its subcellular location is the cell projection. The protein resides in the dendrite. It localises to the postsynaptic density. It catalyses the reaction molybdopterin + ATP + H(+) = adenylyl-molybdopterin + diphosphate. The enzyme catalyses adenylyl-molybdopterin + molybdate = Mo-molybdopterin + AMP + H(+). It participates in cofactor biosynthesis; molybdopterin biosynthesis. Inhibited by copper and tungsten. Its function is as follows. Microtubule-associated protein involved in membrane protein-cytoskeleton interactions. It is thought to anchor the inhibitory glycine receptor (GLYR) to subsynaptic microtubules. Acts as a major instructive molecule at inhibitory synapses, where it also clusters GABA type A receptors. Functionally, also has a catalytic activity and catalyzes two steps in the biosynthesis of the molybdenum cofactor. In the first step, molybdopterin is adenylated. Subsequently, molybdate is inserted into adenylated molybdopterin and AMP is released. This is Gephyrin from Homo sapiens (Human).